Reading from the N-terminus, the 428-residue chain is Putative F-box protein At3g22421 (428 aa).

In terms of domain architecture, F-box spans 4–50 (TTTISHLPTELLDEIISRVPLKSTRAVRLTCKNWDSLFKNRSFMKEE).

This is Putative F-box protein At3g22421 from Arabidopsis thaliana (Mouse-ear cress).